Reading from the N-terminus, the 133-residue chain is MNRRKSREVAMKLLFEMSINKEEFSEILKNFKENTDTNMENVDFIYINKIVNGIEQNKEDIDKKIEENLTKWKLNRLSKIDLTILRISTYEIMFMEDIPNKVAVNEAIELAKKYSADNSPAFVNGVLGNMIKA.

The protein belongs to the NusB family.

Functionally, involved in transcription antitermination. Required for transcription of ribosomal RNA (rRNA) genes. Binds specifically to the boxA antiterminator sequence of the ribosomal RNA (rrn) operons. The chain is Transcription antitermination protein NusB from Clostridium novyi (strain NT).